We begin with the raw amino-acid sequence, 356 residues long: MDTSRKIIHIDMDAFYASVEQRDHPEFRGKPLIIGGDPNKRGVVATCSYEARKFGVHSAMPTRQAAKLCPNGIFIHGNMAHYVEVSNQIREIFSRYTDIIEPLSLDEAYLDVTENKKGMKSATMVAREIQQTIYRELGLTASAGVSFNKFIAKIASDFKKPAGITVVAPEEAEAFLEQIPVTKFYGVGKVTAEKLHRLGIETGADLKKWSEWDLIRELHKHGYQLYRHVRGRSNNIVNPHRDRKSVGKETTFEFNVLDNRILEQSLMKFAKKVEERLIKLQKHGKTVVLKLRYSDFTTITKRLTLNEYTNDANQIYQAAALLLRESYKGQDSIRLIGLTVTNLKPVYFENLRLEGL.

In terms of domain architecture, UmuC spans 1 to 188 (MDTSRKIIHI…IPVTKFYGVG (188 aa)). Aspartate 11 and aspartate 106 together coordinate Mg(2+). Glutamate 107 is a catalytic residue.

It belongs to the DNA polymerase type-Y family. In terms of assembly, monomer. The cofactor is Mg(2+).

It localises to the cytoplasm. It carries out the reaction DNA(n) + a 2'-deoxyribonucleoside 5'-triphosphate = DNA(n+1) + diphosphate. Poorly processive, error-prone DNA polymerase involved in untargeted mutagenesis. Copies undamaged DNA at stalled replication forks, which arise in vivo from mismatched or misaligned primer ends. These misaligned primers can be extended by PolIV. Exhibits no 3'-5' exonuclease (proofreading) activity. May be involved in translesional synthesis, in conjunction with the beta clamp from PolIII. The protein is DNA polymerase IV of Listeria innocua serovar 6a (strain ATCC BAA-680 / CLIP 11262).